We begin with the raw amino-acid sequence, 283 residues long: Probable cytochrome c oxidase subunit 3 (283 aa).

6 helical membrane-spanning segments follow: residues 26-46 (PWPV…VSFM), 51-71 (FNIY…YSWW), 94-114 (IGMA…FASF), 179-199 (CVTA…MQAY), 217-237 (FYLA…FLII), and 261-281 (AWYW…VYIF).

The protein belongs to the cytochrome c oxidase subunit 3 family.

Its subcellular location is the cell membrane. The enzyme catalyses 4 Fe(II)-[cytochrome c] + O2 + 8 H(+)(in) = 4 Fe(III)-[cytochrome c] + 2 H2O + 4 H(+)(out). This chain is Probable cytochrome c oxidase subunit 3 (ctaE), found in Rickettsia conorii (strain ATCC VR-613 / Malish 7).